Reading from the N-terminus, the 334-residue chain is Protein SCO1 homolog 1, mitochondrial (334 aa).

Residues 1-13 (MASALCRTASRLR) constitute a mitochondrion transit peptide. Positions 74–120 (SASDTTSKHDSGKPETKSSEKNEKSGGSESSDGGSDHKNERASGKDV) are disordered. Composition is skewed to basic and acidic residues over residues 79-99 (TSKH…EKSG) and 107-120 (GSDH…GKDV). The helical transmembrane segment at 125–144 (VSWMSFFLLFATGAGLVYYY) threads the bilayer. Positions 166–331 (PSAGKAAIGG…TDGVVKEIRQ (166 aa)) constitute a Thioredoxin domain. Cu cation-binding residues include Cys-206, Cys-210, and His-295.

Belongs to the SCO1/2 family. In terms of tissue distribution, expressed in the whole plant with highest expression in imbibed seeds, embryos, endosperm, and root tips.

It is found in the mitochondrion inner membrane. Thought to play a role in cellular copper homeostasis, mitochondrial redox signaling or insertion of copper into the active site of COX. Plays an essential role in embryo development. The sequence is that of Protein SCO1 homolog 1, mitochondrial (HCC1) from Arabidopsis thaliana (Mouse-ear cress).